The sequence spans 366 residues: tRNA-specific 2-thiouridylase MnmA (366 aa).

ATP contacts are provided by residues 6-13 and Leu32; that span reads AMSGGVDS. The Nucleophile role is filled by Cys101. A disulfide bridge links Cys101 with Cys199. Residue Gly125 participates in ATP binding. Positions 148–150 are interaction with tRNA; sequence KDQ. The Cysteine persulfide intermediate role is filled by Cys199.

This sequence belongs to the MnmA/TRMU family.

It localises to the cytoplasm. It catalyses the reaction S-sulfanyl-L-cysteinyl-[protein] + uridine(34) in tRNA + AH2 + ATP = 2-thiouridine(34) in tRNA + L-cysteinyl-[protein] + A + AMP + diphosphate + H(+). Its function is as follows. Catalyzes the 2-thiolation of uridine at the wobble position (U34) of tRNA, leading to the formation of s(2)U34. This chain is tRNA-specific 2-thiouridylase MnmA, found in Leifsonia xyli subsp. xyli (strain CTCB07).